We begin with the raw amino-acid sequence, 539 residues long: CTP synthase (539 aa).

The tract at residues 1–267 (MTKYIFVTGG…DQKVCDFLHI (267 aa)) is amidoligase domain. A CTP-binding site is contributed by S13. S13 contributes to the UTP binding site. 14 to 19 (SLGKGI) contacts ATP. Residue Y54 coordinates L-glutamine. D71 serves as a coordination point for ATP. Residues D71 and E141 each contribute to the Mg(2+) site. CTP-binding positions include 148-150 (DME), 188-193 (KTKPTQ), and K224. Residues 188-193 (KTKPTQ) and K224 contribute to the UTP site. The region spanning 294–537 (KITLVGKYVE…IGAASGLPEQ (244 aa)) is the Glutamine amidotransferase type-1 domain. G356 is an L-glutamine binding site. C383 acts as the Nucleophile; for glutamine hydrolysis in catalysis. Residues 384–387 (LGMQ), E407, and R465 contribute to the L-glutamine site. Catalysis depends on residues H510 and E512.

It belongs to the CTP synthase family. In terms of assembly, homotetramer.

The enzyme catalyses UTP + L-glutamine + ATP + H2O = CTP + L-glutamate + ADP + phosphate + 2 H(+). The catalysed reaction is L-glutamine + H2O = L-glutamate + NH4(+). It carries out the reaction UTP + NH4(+) + ATP = CTP + ADP + phosphate + 2 H(+). The protein operates within pyrimidine metabolism; CTP biosynthesis via de novo pathway; CTP from UDP: step 2/2. Its activity is regulated as follows. Allosterically activated by GTP, when glutamine is the substrate; GTP has no effect on the reaction when ammonia is the substrate. The allosteric effector GTP functions by stabilizing the protein conformation that binds the tetrahedral intermediate(s) formed during glutamine hydrolysis. Inhibited by the product CTP, via allosteric rather than competitive inhibition. In terms of biological role, catalyzes the ATP-dependent amination of UTP to CTP with either L-glutamine or ammonia as the source of nitrogen. Regulates intracellular CTP levels through interactions with the four ribonucleotide triphosphates. The polypeptide is CTP synthase (Lactobacillus helveticus (strain DPC 4571)).